A 248-amino-acid polypeptide reads, in one-letter code: 1-(5-phosphoribosyl)-5-[(5-phosphoribosylamino)methylideneamino] imidazole-4-carboxamide isomerase (248 aa).

The active-site Proton acceptor is the Asp8. Asp129 serves as the catalytic Proton donor.

It belongs to the HisA/HisF family.

It localises to the cytoplasm. It catalyses the reaction 1-(5-phospho-beta-D-ribosyl)-5-[(5-phospho-beta-D-ribosylamino)methylideneamino]imidazole-4-carboxamide = 5-[(5-phospho-1-deoxy-D-ribulos-1-ylimino)methylamino]-1-(5-phospho-beta-D-ribosyl)imidazole-4-carboxamide. It participates in amino-acid biosynthesis; L-histidine biosynthesis; L-histidine from 5-phospho-alpha-D-ribose 1-diphosphate: step 4/9. The polypeptide is 1-(5-phosphoribosyl)-5-[(5-phosphoribosylamino)methylideneamino] imidazole-4-carboxamide isomerase (Rhizobium etli (strain ATCC 51251 / DSM 11541 / JCM 21823 / NBRC 15573 / CFN 42)).